Here is a 376-residue protein sequence, read N- to C-terminus: Gibberellin 20 oxidase 4 (376 aa).

Residues 222–322 (DNESIFRLNY…RKTLAFFLCP (101 aa)) enclose the Fe2OG dioxygenase domain. Fe cation is bound by residues histidine 247, aspartate 249, and histidine 303. Arginine 313 is a catalytic residue.

This sequence belongs to the iron/ascorbate-dependent oxidoreductase family. GA20OX subfamily. The cofactor is Fe(2+). It depends on L-ascorbate as a cofactor. Expressed in roots. Detected in leaves, inflorescences and siliques, but not in stems and dry seeds.

The catalysed reaction is gibberellin A12 + 2 2-oxoglutarate + 3 O2 + H(+) = gibberellin A9 + 2 succinate + 3 CO2 + 2 H2O. It catalyses the reaction gibberellin A53 + 2 2-oxoglutarate + 3 O2 + H(+) = gibberellin A20 + 2 succinate + 3 CO2 + 2 H2O. It functions in the pathway plant hormone biosynthesis; gibberellin biosynthesis. Key oxidase enzyme in the biosynthesis of gibberellin that catalyzes the conversion of GA12 and GA53 to GA9 and GA20 respectively, via a three-step oxidation at C-20 of the GA skeleton. The chain is Gibberellin 20 oxidase 4 (GA20OX4) from Arabidopsis thaliana (Mouse-ear cress).